Reading from the N-terminus, the 158-residue chain is MLP-like protein 43 (158 aa).

The residue at position 2 (Ala-2) is an N-acetylalanine.

The protein belongs to the MLP family.

The sequence is that of MLP-like protein 43 (MLP43) from Arabidopsis thaliana (Mouse-ear cress).